Here is a 929-residue protein sequence, read N- to C-terminus: SED5-binding protein 3 (929 aa).

Ser15 carries the phosphoserine modification. A compositionally biased stretch (polar residues) spans 18-28 (ESTVHTGGASS). Positions 18 to 52 (ESTVHTGGASSKKSRRPHRAYHNFSSGTVPTLGNS) are disordered. The span at 29 to 38 (KKSRRPHRAY) shows a compositional bias: basic residues. Residues 40–52 (NFSSGTVPTLGNS) show a composition bias toward polar residues. Thr72 carries the phosphothreonine modification. Phosphoserine occurs at positions 83, 85, 94, 101, and 110. Thr216 carries the phosphothreonine modification. The segment at 220-244 (CRRCRAYANPKFQFTYDSSVICNIC) is zinc finger-like.

The protein belongs to the SEC23/SEC24 family. SEC24 subfamily. As to quaternary structure, COPII is composed of at least five proteins: the SEC23/24 complex, the SEC13/31 complex and SAR1. Binds to SED5. Interacts with GHR1.

The protein localises to the cytoplasm. It is found in the golgi apparatus membrane. The protein resides in the endoplasmic reticulum membrane. In terms of biological role, component of the COPII coat, that covers ER-derived vesicles involved in transport from the endoplasmic reticulum to the Golgi apparatus. COPII acts in the cytoplasm to promote the transport of secretory, plasma membrane, and vacuolar proteins from the endoplasmic reticulum to the Golgi complex. The polypeptide is SED5-binding protein 3 (SFB3) (Saccharomyces cerevisiae (strain ATCC 204508 / S288c) (Baker's yeast)).